The primary structure comprises 277 residues: Ribosomal RNA small subunit methyltransferase I (277 aa).

The protein belongs to the methyltransferase superfamily. RsmI family.

It is found in the cytoplasm. It catalyses the reaction cytidine(1402) in 16S rRNA + S-adenosyl-L-methionine = 2'-O-methylcytidine(1402) in 16S rRNA + S-adenosyl-L-homocysteine + H(+). Functionally, catalyzes the 2'-O-methylation of the ribose of cytidine 1402 (C1402) in 16S rRNA. This is Ribosomal RNA small subunit methyltransferase I from Mycoplasma genitalium (strain ATCC 33530 / DSM 19775 / NCTC 10195 / G37) (Mycoplasmoides genitalium).